The following is a 92-amino-acid chain: Small ribosomal subunit protein uS19 (92 aa).

Belongs to the universal ribosomal protein uS19 family.

Functionally, protein S19 forms a complex with S13 that binds strongly to the 16S ribosomal RNA. The polypeptide is Small ribosomal subunit protein uS19 (Bacillus pumilus (strain SAFR-032)).